Consider the following 728-residue polypeptide: Lanosterol synthase (728 aa).

One copy of the PFTB 1 repeat lies at 117–159 (RVEMIRYIVNTAHPVDGGWGLHSVDKSTCFGTTMNYVCLRLLG). The active-site Proton donor is Asp-450. 2 PFTB repeats span residues 561-602 (ISSA…HTVG) and 611-657 (VKKG…ALIG).

The protein belongs to the terpene cyclase/mutase family.

The protein localises to the lipid droplet. Its subcellular location is the endoplasmic reticulum membrane. The enzyme catalyses (S)-2,3-epoxysqualene = lanosterol. It participates in terpene metabolism; lanosterol biosynthesis; lanosterol from farnesyl diphosphate: step 3/3. Lanosterol synthase; part of the third module of ergosterol biosynthesis pathway that includes the late steps of the pathway. ERG7 catalyzes the cyclization of (S)-2,3 oxidosqualene to lanosterol, a reaction that forms the sterol core. The third module or late pathway involves the ergosterol synthesis itself through consecutive reactions that mainly occur in the endoplasmic reticulum (ER) membrane. Firstly, the squalene synthase ERG9 catalyzes the condensation of 2 farnesyl pyrophosphate moieties to form squalene, which is the precursor of all steroids. Squalene synthase is crucial for balancing the incorporation of farnesyl diphosphate (FPP) into sterol and nonsterol isoprene synthesis. Secondly, the squalene epoxidase ERG1 catalyzes the stereospecific oxidation of squalene to (S)-2,3-epoxysqualene, which is considered to be a rate-limiting enzyme in steroid biosynthesis. Then, the lanosterol synthase ERG7 catalyzes the cyclization of (S)-2,3 oxidosqualene to lanosterol, a reaction that forms the sterol core. In the next steps, lanosterol is transformed to zymosterol through a complex process involving various demethylation, reduction and desaturation reactions. The lanosterol 14-alpha-demethylase ERG11 (also known as CYP51) catalyzes C14-demethylation of lanosterol to produce 4,4'-dimethyl cholesta-8,14,24-triene-3-beta-ol, which is critical for ergosterol biosynthesis. The C-14 reductase ERG24 reduces the C14=C15 double bond of 4,4-dimethyl-cholesta-8,14,24-trienol to produce 4,4-dimethyl-cholesta-8,24-dienol. 4,4-dimethyl-cholesta-8,24-dienol is substrate of the C-4 demethylation complex ERG25-ERG26-ERG27 in which ERG25 catalyzes the three-step monooxygenation required for the demethylation of 4,4-dimethyl and 4alpha-methylsterols, ERG26 catalyzes the oxidative decarboxylation that results in a reduction of the 3-beta-hydroxy group at the C-3 carbon to an oxo group, and ERG27 is responsible for the reduction of the keto group on the C-3. ERG28 has a role as a scaffold to help anchor ERG25, ERG26 and ERG27 to the endoplasmic reticulum and ERG29 regulates the activity of the iron-containing C4-methylsterol oxidase ERG25. Then, the sterol 24-C-methyltransferase ERG6 catalyzes the methyl transfer from S-adenosyl-methionine to the C-24 of zymosterol to form fecosterol. The C-8 sterol isomerase ERG2 catalyzes the reaction which results in unsaturation at C-7 in the B ring of sterols and thus converts fecosterol to episterol. The sterol-C5-desaturase ERG3 then catalyzes the introduction of a C-5 double bond in the B ring to produce 5-dehydroepisterol. The C-22 sterol desaturase ERG5 further converts 5-dehydroepisterol into ergosta-5,7,22,24(28)-tetraen-3beta-ol by forming the C-22(23) double bond in the sterol side chain. Finally, ergosta-5,7,22,24(28)-tetraen-3beta-ol is substrate of the C-24(28) sterol reductase ERG4 to produce ergosterol. This Candida albicans (strain SC5314 / ATCC MYA-2876) (Yeast) protein is Lanosterol synthase.